A 478-amino-acid chain; its full sequence is Lysosome membrane protein 2 (478 aa).

Residues 1–4 are Cytoplasmic-facing; it reads MGRC. A helical membrane pass occupies residues 5–27; that stretch reads CFYTAGTLSLLLLVTSVTLLVAR. At 28–433 the chain is on the lumenal side; sequence VFQKAVDQSI…RLKSMINTTL (406 aa). N-linked (GlcNAc...) asparagine glycans are attached at residues asparagine 45, asparagine 68, and asparagine 105. The important for interaction with GBA1 stretch occupies residues 155–191; the sequence is IIEAMLKAYQQKLFVTHTVDELLWGYKDEILSLIHVF. N-linked (GlcNAc...) asparagine glycosylation is found at asparagine 206, asparagine 224, asparagine 249, and asparagine 304. Disulfide bonds link cysteine 274-cysteine 329 and cysteine 312-cysteine 318. Residues asparagine 325, asparagine 412, and asparagine 430 are each glycosylated (N-linked (GlcNAc...) asparagine). Residues 434–459 form a helical membrane-spanning segment; that stretch reads IITNIPYIIMALGVFFGLVFTWLACK. The Cytoplasmic portion of the chain corresponds to 460–478; sequence GQGSMDEGTADERAPLIRT.

The protein belongs to the CD36 family. As to quaternary structure, interacts with GBA1. (Microbial infection) Interacts with enterovirus 71 capsid proteins VP1 and VP2.

It localises to the lysosome membrane. In terms of biological role, acts as a lysosomal receptor for glucosylceramidase (GBA1) targeting. Functionally, (Microbial infection) Acts as a receptor for enterovirus 71. The protein is Lysosome membrane protein 2 (SCARB2) of Homo sapiens (Human).